Consider the following 829-residue polypeptide: Leucine--tRNA ligase (829 aa).

The short motif at 40-50 (PYPSGNIHMGH) is the 'HIGH' region element. Residues 581 to 585 (KMSKS) carry the 'KMSKS' region motif. Residue lysine 584 participates in ATP binding.

This sequence belongs to the class-I aminoacyl-tRNA synthetase family.

The protein localises to the cytoplasm. It catalyses the reaction tRNA(Leu) + L-leucine + ATP = L-leucyl-tRNA(Leu) + AMP + diphosphate. The polypeptide is Leucine--tRNA ligase (Nitratidesulfovibrio vulgaris (strain DP4) (Desulfovibrio vulgaris)).